The sequence spans 578 residues: Kelch repeat-containing protein kel-10 (578 aa).

Positions 51-118 (PTVTLVLRNN…PKAFEQGIKP (68 aa)) constitute a BTB domain. The BACK domain occupies 158 to 236 (IKIFRLALLY…NSPLQSDRMA (79 aa)). Kelch repeat units follow at residues 265 to 315 (AIVC…VVED), 316 to 362 (KLIV…RIND), 368 to 414 (LIFA…TIDN), 416 to 462 (IVVI…SIMN), 464 to 510 (VCMI…QMDT), and 512 to 558 (SIYV…TLSD).

This Caenorhabditis elegans protein is Kelch repeat-containing protein kel-10.